A 285-amino-acid chain; its full sequence is ATP phosphoribosyltransferase (285 aa).

It belongs to the ATP phosphoribosyltransferase family. Long subfamily. Mg(2+) serves as cofactor.

The protein resides in the cytoplasm. The enzyme catalyses 1-(5-phospho-beta-D-ribosyl)-ATP + diphosphate = 5-phospho-alpha-D-ribose 1-diphosphate + ATP. It participates in amino-acid biosynthesis; L-histidine biosynthesis; L-histidine from 5-phospho-alpha-D-ribose 1-diphosphate: step 1/9. Its activity is regulated as follows. Feedback inhibited by histidine. Catalyzes the condensation of ATP and 5-phosphoribose 1-diphosphate to form N'-(5'-phosphoribosyl)-ATP (PR-ATP). Has a crucial role in the pathway because the rate of histidine biosynthesis seems to be controlled primarily by regulation of HisG enzymatic activity. In Sulfolobus acidocaldarius (strain ATCC 33909 / DSM 639 / JCM 8929 / NBRC 15157 / NCIMB 11770), this protein is ATP phosphoribosyltransferase.